The primary structure comprises 361 residues: Aminomethyltransferase (361 aa).

Belongs to the GcvT family. As to quaternary structure, the glycine cleavage system is composed of four proteins: P, T, L and H.

It carries out the reaction N(6)-[(R)-S(8)-aminomethyldihydrolipoyl]-L-lysyl-[protein] + (6S)-5,6,7,8-tetrahydrofolate = N(6)-[(R)-dihydrolipoyl]-L-lysyl-[protein] + (6R)-5,10-methylene-5,6,7,8-tetrahydrofolate + NH4(+). In terms of biological role, the glycine cleavage system catalyzes the degradation of glycine. The polypeptide is Aminomethyltransferase (Phocaeicola vulgatus (strain ATCC 8482 / DSM 1447 / JCM 5826 / CCUG 4940 / NBRC 14291 / NCTC 11154) (Bacteroides vulgatus)).